Consider the following 414-residue polypeptide: DNA primase small subunit PriS (414 aa).

Active-site residues include D98, D100, and D312.

The protein belongs to the eukaryotic-type primase small subunit family. Heterodimer of a small subunit (PriS) and a large subunit (PriL). Mg(2+) serves as cofactor. Mn(2+) is required as a cofactor.

In terms of biological role, catalytic subunit of DNA primase, an RNA polymerase that catalyzes the synthesis of short RNA molecules used as primers for DNA polymerase during DNA replication. The small subunit contains the primase catalytic core and has DNA synthesis activity on its own. Binding to the large subunit stabilizes and modulates the activity, increasing the rate of DNA synthesis while decreasing the length of the DNA fragments, and conferring RNA synthesis capability. The DNA polymerase activity may enable DNA primase to also catalyze primer extension after primer synthesis. May also play a role in DNA repair. The sequence is that of DNA primase small subunit PriS from Methanosarcina barkeri (strain Fusaro / DSM 804).